Reading from the N-terminus, the 145-residue chain is D-aminoacyl-tRNA deacylase (145 aa).

A Gly-cisPro motif, important for rejection of L-amino acids motif is present at residues 137–138 (GP).

Belongs to the DTD family. In terms of assembly, homodimer.

It is found in the cytoplasm. The enzyme catalyses glycyl-tRNA(Ala) + H2O = tRNA(Ala) + glycine + H(+). It catalyses the reaction a D-aminoacyl-tRNA + H2O = a tRNA + a D-alpha-amino acid + H(+). An aminoacyl-tRNA editing enzyme that deacylates mischarged D-aminoacyl-tRNAs. Also deacylates mischarged glycyl-tRNA(Ala), protecting cells against glycine mischarging by AlaRS. Acts via tRNA-based rather than protein-based catalysis; rejects L-amino acids rather than detecting D-amino acids in the active site. By recycling D-aminoacyl-tRNA to D-amino acids and free tRNA molecules, this enzyme counteracts the toxicity associated with the formation of D-aminoacyl-tRNA entities in vivo and helps enforce protein L-homochirality. This chain is D-aminoacyl-tRNA deacylase, found in Lactobacillus delbrueckii subsp. bulgaricus (strain ATCC 11842 / DSM 20081 / BCRC 10696 / JCM 1002 / NBRC 13953 / NCIMB 11778 / NCTC 12712 / WDCM 00102 / Lb 14).